Reading from the N-terminus, the 626-residue chain is UvrABC system protein C (626 aa).

A GIY-YIG domain is found at 20 to 97 (ECSGVYKMLD…IKKFQPKFNI (78 aa)). The UVR domain maps to 207–242 (RELQENLSKKMQELSSQMRFEEAAEIRDRIKALSYV).

Belongs to the UvrC family. As to quaternary structure, interacts with UvrB in an incision complex.

Its subcellular location is the cytoplasm. Functionally, the UvrABC repair system catalyzes the recognition and processing of DNA lesions. UvrC both incises the 5' and 3' sides of the lesion. The N-terminal half is responsible for the 3' incision and the C-terminal half is responsible for the 5' incision. The protein is UvrABC system protein C of Rickettsia typhi (strain ATCC VR-144 / Wilmington).